Reading from the N-terminus, the 415-residue chain is UDP-galactose transporter homolog 1 (415 aa).

The tract at residues 1-39 (MHLVPEGSESMSTQQNGSAQKPVTLNGSASTKGQAPEAP) is disordered. The span at 9 to 33 (ESMSTQQNGSAQKPVTLNGSASTKG) shows a compositional bias: polar residues. N-linked (GlcNAc...) asparagine glycans are attached at residues Asn16 and Asn26. 5 consecutive transmembrane segments (helical) span residues 45–65 (LIQLAICVLGIYASFLSWGVL), 95–115 (IVLNTIQSTFAAITGFLYLYF), 132–152 (ILFPLLLVSISSSLASPFGYA), 161–181 (TFILAKSCKLLPVMFLHLTIF), and 185–205 (YPLYKYGVVLLVTLGVATFTL). Asn221 is a glycosylation site (N-linked (GlcNAc...) asparagine). The chain crosses the membrane as a helical span at residues 223–243 (SGSSLYGIFLLSINLLLDGLT). The N-linked (GlcNAc...) asparagine glycan is linked to Asn244. A run of 3 helical transmembrane segments spans residues 281–301 (LLVMPHLSSTGALHALLPIPI), 325–345 (NVLGFAACGAIGQLFIFYTLS), and 368–388 (VFWFGHTLSAGQWLGIGLVFG).

Belongs to the nucleotide-sugar transporter family. SLC35B subfamily.

It is found in the endoplasmic reticulum membrane. May be involved in specific transport of UDP-Gal from the cytosol to the Golgi lumen. Involved in the maintenance of optimal conditions for the folding of secretory pathway proteins in the endoplasmic reticulum. In Aspergillus fumigatus (strain ATCC MYA-4609 / CBS 101355 / FGSC A1100 / Af293) (Neosartorya fumigata), this protein is UDP-galactose transporter homolog 1 (hut1).